The primary structure comprises 66 residues: Large ribosomal subunit protein bL35 (66 aa).

Residues 1–46 (MPKMKTHRASAKRFKRTANGGLKRHHAFTGHRFHGKTKKQRRHLRK) are compositionally biased toward basic residues. Positions 1–52 (MPKMKTHRASAKRFKRTANGGLKRHHAFTGHRFHGKTKKQRRHLRKPAMVSR) are disordered.

The protein belongs to the bacterial ribosomal protein bL35 family.

This chain is Large ribosomal subunit protein bL35, found in Lactobacillus acidophilus (strain ATCC 700396 / NCK56 / N2 / NCFM).